The sequence spans 525 residues: Zwittermicin A synthase ZmaJ (525 aa).

It belongs to the ATP-dependent AMP-binding enzyme family.

The catalysed reaction is holo-[peptidyl-carrier protein] + L-serine + ATP = L-seryl-[peptidyl-carrier protein] + AMP + diphosphate. It functions in the pathway antibiotic biosynthesis. Functionally, involved in the biosynthesis of the linear aminopolyol antibiotic zwittermicin A (ZmA). Specifically adenylates L-serine and loads it onto the holo form of ZmaH via a thioester linkage to the phosphopanthetheine moiety. This Bacillus cereus protein is Zwittermicin A synthase ZmaJ.